The sequence spans 75 residues: MSKTITIADDVYYELVKMKGKRSFSEVLRELIGKKKEGNLDVLMIAFGTMDEEEAKELEEKIKEVGKWLNSWTPV.

Belongs to the UPF0330 family.

Its function is as follows. Possibly the antitoxin component of a type II toxin-antitoxin (TA) system. The polypeptide is Putative antitoxin PH1062.1 (Pyrococcus horikoshii (strain ATCC 700860 / DSM 12428 / JCM 9974 / NBRC 100139 / OT-3)).